The primary structure comprises 450 residues: MGKYFGTDGVRGVANSELTPEFAFKLGRIGGYVLTKDATDRPKVLIGRDTRISGEMLEGALVAGLLSIGVEVMRLGIISTPGVAYLTRIMSADAGVMISASHNPVADNGIKFFGPDGFKLTDAQEEEIEVLLDAQEDTLPRPIGADLGSVSDYFEGGQKYIQYLKQTVDEEFDGIHVALDCAHGATSSLATHLFADLEADISTMGSSPNGLNINDGVGSTHPEGLAKFVLEKDADVGLAFDGDGDRLIAVDENGKIVDGDQIMFIIGKYLNAVGRLKKQTIVSTVMSNMGFYKAVEDNGMQSIQTAVGDRYVVEEMRANDYNLGGEQSGHIVFLDFNTTGDGLLTGIQLVNIMKATGKKLSELAAEMKIYPQRLVNVRVTDKHAVTENTKVAAVIAEVEAAMAGNGRVLVRPSGTEPLVRVMVEAATETACERFVERIADVVRAEMGLTD.

The Phosphoserine intermediate role is filled by serine 101. 4 residues coordinate Mg(2+): serine 101, aspartate 241, aspartate 243, and aspartate 245. Serine 101 is subject to Phosphoserine.

The protein belongs to the phosphohexose mutase family. Mg(2+) is required as a cofactor. Activated by phosphorylation.

It catalyses the reaction alpha-D-glucosamine 1-phosphate = D-glucosamine 6-phosphate. Functionally, catalyzes the conversion of glucosamine-6-phosphate to glucosamine-1-phosphate. This chain is Phosphoglucosamine mutase, found in Lysinibacillus sphaericus (strain C3-41).